The following is a 460-amino-acid chain: ATP synthase subunit beta 1 (460 aa).

Gly149 to Thr156 contributes to the ATP binding site.

The protein belongs to the ATPase alpha/beta chains family. F-type ATPases have 2 components, CF(1) - the catalytic core - and CF(0) - the membrane proton channel. CF(1) has five subunits: alpha(3), beta(3), gamma(1), delta(1), epsilon(1). CF(0) has three main subunits: a(1), b(2) and c(9-12). The alpha and beta chains form an alternating ring which encloses part of the gamma chain. CF(1) is attached to CF(0) by a central stalk formed by the gamma and epsilon chains, while a peripheral stalk is formed by the delta and b chains.

Its subcellular location is the cell inner membrane. It carries out the reaction ATP + H2O + 4 H(+)(in) = ADP + phosphate + 5 H(+)(out). Functionally, produces ATP from ADP in the presence of a proton gradient across the membrane. The catalytic sites are hosted primarily by the beta subunits. The sequence is that of ATP synthase subunit beta 1 from Nitrosomonas eutropha (strain DSM 101675 / C91 / Nm57).